The following is a 316-amino-acid chain: 4-hydroxy-3-methylbut-2-enyl diphosphate reductase (316 aa).

Residue Cys-12 coordinates [4Fe-4S] cluster. Residues His-41 and His-74 each contribute to the (2E)-4-hydroxy-3-methylbut-2-enyl diphosphate site. Positions 41 and 74 each coordinate dimethylallyl diphosphate. Residues His-41 and His-74 each coordinate isopentenyl diphosphate. Cys-96 serves as a coordination point for [4Fe-4S] cluster. His-124 provides a ligand contact to (2E)-4-hydroxy-3-methylbut-2-enyl diphosphate. His-124 contributes to the dimethylallyl diphosphate binding site. Residue His-124 participates in isopentenyl diphosphate binding. The Proton donor role is filled by Glu-126. Thr-168 is a binding site for (2E)-4-hydroxy-3-methylbut-2-enyl diphosphate. Cys-198 is a [4Fe-4S] cluster binding site. Positions 226, 227, 228, and 270 each coordinate (2E)-4-hydroxy-3-methylbut-2-enyl diphosphate. Dimethylallyl diphosphate is bound by residues Ser-226, Ser-227, Asn-228, and Ser-270. Isopentenyl diphosphate contacts are provided by Ser-226, Ser-227, Asn-228, and Ser-270.

Belongs to the IspH family. [4Fe-4S] cluster serves as cofactor.

The enzyme catalyses isopentenyl diphosphate + 2 oxidized [2Fe-2S]-[ferredoxin] + H2O = (2E)-4-hydroxy-3-methylbut-2-enyl diphosphate + 2 reduced [2Fe-2S]-[ferredoxin] + 2 H(+). It catalyses the reaction dimethylallyl diphosphate + 2 oxidized [2Fe-2S]-[ferredoxin] + H2O = (2E)-4-hydroxy-3-methylbut-2-enyl diphosphate + 2 reduced [2Fe-2S]-[ferredoxin] + 2 H(+). The protein operates within isoprenoid biosynthesis; dimethylallyl diphosphate biosynthesis; dimethylallyl diphosphate from (2E)-4-hydroxy-3-methylbutenyl diphosphate: step 1/1. Its pathway is isoprenoid biosynthesis; isopentenyl diphosphate biosynthesis via DXP pathway; isopentenyl diphosphate from 1-deoxy-D-xylulose 5-phosphate: step 6/6. In terms of biological role, catalyzes the conversion of 1-hydroxy-2-methyl-2-(E)-butenyl 4-diphosphate (HMBPP) into a mixture of isopentenyl diphosphate (IPP) and dimethylallyl diphosphate (DMAPP). Acts in the terminal step of the DOXP/MEP pathway for isoprenoid precursor biosynthesis. The sequence is that of 4-hydroxy-3-methylbut-2-enyl diphosphate reductase from Acinetobacter baylyi (strain ATCC 33305 / BD413 / ADP1).